A 75-amino-acid polypeptide reads, in one-letter code: Exodeoxyribonuclease 7 small subunit (75 aa).

The protein belongs to the XseB family. As to quaternary structure, heterooligomer composed of large and small subunits.

The protein resides in the cytoplasm. The catalysed reaction is Exonucleolytic cleavage in either 5'- to 3'- or 3'- to 5'-direction to yield nucleoside 5'-phosphates.. Its function is as follows. Bidirectionally degrades single-stranded DNA into large acid-insoluble oligonucleotides, which are then degraded further into small acid-soluble oligonucleotides. The protein is Exodeoxyribonuclease 7 small subunit of Clostridium perfringens (strain ATCC 13124 / DSM 756 / JCM 1290 / NCIMB 6125 / NCTC 8237 / Type A).